The sequence spans 351 residues: Thiamine-phosphate synthase (351 aa).

The tract at residues 1-129 (MVEPYSQQKQ…GQACKQMRYR (129 aa)) is unknown. Positions 130–351 (VYSLETNLMG…SQLNRIKPES (222 aa)) are thiamine-phosphate synthase. 4-amino-2-methyl-5-(diphosphooxymethyl)pyrimidine contacts are provided by residues 177 to 181 (QYRDK) and N209. Mg(2+) is bound by residues D210 and D229. S248 lines the 4-amino-2-methyl-5-(diphosphooxymethyl)pyrimidine pocket. Residue 274–276 (TPT) coordinates 2-[(2R,5Z)-2-carboxy-4-methylthiazol-5(2H)-ylidene]ethyl phosphate. K277 is a 4-amino-2-methyl-5-(diphosphooxymethyl)pyrimidine binding site. G304 contributes to the 2-[(2R,5Z)-2-carboxy-4-methylthiazol-5(2H)-ylidene]ethyl phosphate binding site.

Belongs to the thiamine-phosphate synthase family. It depends on Mg(2+) as a cofactor.

The catalysed reaction is 2-[(2R,5Z)-2-carboxy-4-methylthiazol-5(2H)-ylidene]ethyl phosphate + 4-amino-2-methyl-5-(diphosphooxymethyl)pyrimidine + 2 H(+) = thiamine phosphate + CO2 + diphosphate. It catalyses the reaction 2-(2-carboxy-4-methylthiazol-5-yl)ethyl phosphate + 4-amino-2-methyl-5-(diphosphooxymethyl)pyrimidine + 2 H(+) = thiamine phosphate + CO2 + diphosphate. The enzyme catalyses 4-methyl-5-(2-phosphooxyethyl)-thiazole + 4-amino-2-methyl-5-(diphosphooxymethyl)pyrimidine + H(+) = thiamine phosphate + diphosphate. The protein operates within cofactor biosynthesis; thiamine diphosphate biosynthesis; thiamine phosphate from 4-amino-2-methyl-5-diphosphomethylpyrimidine and 4-methyl-5-(2-phosphoethyl)-thiazole: step 1/1. Condenses 4-methyl-5-(beta-hydroxyethyl)thiazole monophosphate (THZ-P) and 2-methyl-4-amino-5-hydroxymethyl pyrimidine pyrophosphate (HMP-PP) to form thiamine monophosphate (TMP). This chain is Thiamine-phosphate synthase, found in Nostoc sp. (strain PCC 7120 / SAG 25.82 / UTEX 2576).